Here is a 101-residue protein sequence, read N- to C-terminus: Small ribosomal subunit protein uS14 (101 aa).

The segment at 1 to 23 (MAKKSSVEKNKRRRKMVAQQAPK) is disordered.

It belongs to the universal ribosomal protein uS14 family. Part of the 30S ribosomal subunit. Contacts proteins S3 and S10.

Binds 16S rRNA, required for the assembly of 30S particles and may also be responsible for determining the conformation of the 16S rRNA at the A site. This is Small ribosomal subunit protein uS14 from Rhodospirillum centenum (strain ATCC 51521 / SW).